A 65-amino-acid chain; its full sequence is MFKLGVLLTICLLLFSLNAVPLDGDQPADQPAERLLDDISFENNPFYDPAKRCCRTCFGCTPCCG.

An N-terminal signal peptide occupies residues 1–19 (MFKLGVLLTICLLLFSLNA). A propeptide spanning residues 20 to 50 (VPLDGDQPADQPAERLLDDISFENNPFYDPA) is cleaved from the precursor. 3 disulfides stabilise this stretch: C53–C64, C54–C60, and C57–C63. At P62 the chain carries 4-hydroxyproline; partial. The residue at position 64 (C64) is a Cysteine amide.

In terms of processing, the hydroxylation at Pro-62 is observed in PubMed:15924437, PubMed:19380747 and PubMed:22709442, and the non-hydroxylation is described in PubMed:22709442. As to expression, expressed by the venom duct.

Its subcellular location is the secreted. Causes scratching in mice. The chain is Conotoxin tx3c from Conus textile (Cloth-of-gold cone).